A 704-amino-acid chain; its full sequence is Plasma membrane ATPase 2 (704 aa).

The chain crosses the membrane as a helical span at residues 1-16 (CSIAVGMIIEIIVMYP). Topologically, residues 17-26 (IQHRKYRPGI) are extracellular. A helical transmembrane segment spans residues 27-48 (DNLLVLLIGGIPIAMPTVLSVT). The Cytoplasmic portion of the chain corresponds to 49-395 (MAIGSHRLAQ…TSRAIFQRMK (347 aa)). The active-site 4-aspartylphosphate intermediate is D81. The Mg(2+) site is built by D340 and D344. Residues 396–417 (NYTIYAVSITIRIVLGFMLLAL) form a helical membrane-spanning segment. Topologically, residues 418–422 (IWKFD) are extracellular. A helical membrane pass occupies residues 423 to 445 (FPPFMVLIIAILNDGTIMTISKD). The Cytoplasmic segment spans residues 446–461 (RVKPSPLPDSWKLAEI). The chain crosses the membrane as a helical span at residues 462–482 (FTTGVVLGGYLAMMTVIFFWA). Residues 483 to 507 (AYETQFFPRVFGVSTLQRTATDDFR) are Extracellular-facing. Residues 508 to 528 (KLASAIYLQVSTISQALIFVT) traverse the membrane as a helical segment. At 529–540 (RSRSWSFVERPG) the chain is on the cytoplasmic side. The helical transmembrane segment at 541-561 (LLLVVALIVAQLVATLIAVYA) threads the bilayer. The Extracellular portion of the chain corresponds to 562 to 570 (SWSFAAIEG). A helical membrane pass occupies residues 571–591 (IGWGWAGVIWLYNLVFYFPLD). Residues 592–704 (IIKFLIRYAL…IETIQQSYTV (113 aa)) lie on the Cytoplasmic side of the membrane.

The protein belongs to the cation transport ATPase (P-type) (TC 3.A.3) family. Type IIIA subfamily. As to quaternary structure, possibly exists as a homodimer or a homotrimer.

It is found in the cell membrane. The enzyme catalyses ATP + H2O + H(+)(in) = ADP + phosphate + 2 H(+)(out). In terms of biological role, the plasma membrane ATPase of plants and fungi is a hydrogen ion pump. The proton gradient it generates drives the active transport of nutrients by H(+)-symport. The resulting external acidification and/or internal alkinization may mediate growth responses. In Solanum lycopersicum (Tomato), this protein is Plasma membrane ATPase 2 (LHA2).